Reading from the N-terminus, the 375-residue chain is Pulmonary surfactant-associated protein D (375 aa).

Positions 1-20 (MLLFLLSALVLLTQPLGYLE) are cleaved as a signal peptide. 2 positions are modified to S-nitrosocysteine: cysteine 35 and cysteine 40. Residues 45–221 (SGLPGRDGRD…DKGAKGESGL (177 aa)) are disordered. A Collagen-like domain is found at 46–222 (GLPGRDGRDG…KGAKGESGLP (177 aa)). Basic and acidic residues predominate over residues 50 to 65 (RDGRDGREGPRGEKGD). Over residues 66-86 (PGLPGAAGQAGMPGQAGPVGP) the composition is skewed to low complexity. Proline 78 carries the 4-hydroxyproline modification. Lysine 87 is subject to 5-hydroxylysine. The N-linked (GlcNAc...) asparagine glycan is linked to asparagine 90. Residue proline 96 is modified to 4-hydroxyproline. At lysine 99 the chain carries 5-hydroxylysine. A compositionally biased stretch (pro residues) spans 105–114 (SGPPGPPGVP). Composition is skewed to low complexity over residues 116 to 132 (PAGR…IGPQ) and 138 to 150 (KGEA…VGAP). Proline 171 and proline 177 each carry 4-hydroxyproline. The span at 204 to 216 (KGDKGIPGDKGAK) shows a compositional bias: basic and acidic residues. Positions 223-252 (DVASLRQQVEALQGQVQHLQAAFSQYKKVE) form a coiled coil. The region spanning 260 to 375 (VGEKIFKTAG…GEKRLVVCEF (116 aa)) is the C-type lectin domain. Disulfide bonds link cysteine 281–cysteine 373 and cysteine 351–cysteine 365.

Belongs to the SFTPD family. Oligomeric complex of 4 set of homotrimers. The N-terminus is blocked. In terms of processing, hydroxylation on proline residues within the sequence motif, GXPG, is most likely to be 4-hydroxy as this fits the requirement for 4-hydroxylation in vertebrates. Post-translationally, S-nitrosylation at Cys-35 and Cys-40 alters the quaternary structure which results in a pro-inflammatory chemoattractive signaling activity with macrophages. In terms of tissue distribution, expressed in lung, brain, pancreas and adipose tissue (mainly mature adipocytes).

It is found in the secreted. It localises to the extracellular space. The protein resides in the extracellular matrix. The protein localises to the surface film. Its function is as follows. Contributes to the lung's defense against inhaled microorganisms, organic antigens and toxins. Interacts with compounds such as bacterial lipopolysaccharides, oligosaccharides and fatty acids and modulates leukocyte action in immune response. May participate in the extracellular reorganization or turnover of pulmonary surfactant. Binds strongly maltose residues and to a lesser extent other alpha-glucosyl moieties. The polypeptide is Pulmonary surfactant-associated protein D (SFTPD) (Homo sapiens (Human)).